Consider the following 260-residue polypeptide: Triosephosphate isomerase (260 aa).

A substrate-binding site is contributed by 11–13; that stretch reads NWK. Residue His103 is the Electrophile of the active site. The active-site Proton acceptor is Glu175. Substrate contacts are provided by residues Gly181, Ser220, and 241-242; that span reads GG.

This sequence belongs to the triosephosphate isomerase family. In terms of assembly, homodimer.

Its subcellular location is the cytoplasm. It carries out the reaction D-glyceraldehyde 3-phosphate = dihydroxyacetone phosphate. It participates in carbohydrate biosynthesis; gluconeogenesis. The protein operates within carbohydrate degradation; glycolysis; D-glyceraldehyde 3-phosphate from glycerone phosphate: step 1/1. Involved in the gluconeogenesis. Catalyzes stereospecifically the conversion of dihydroxyacetone phosphate (DHAP) to D-glyceraldehyde-3-phosphate (G3P). The protein is Triosephosphate isomerase of Shewanella pealeana (strain ATCC 700345 / ANG-SQ1).